The primary structure comprises 483 residues: Protein LMBR1L (483 aa).

Over 1–21 (MEVNQDVSVREQIFHDWVREC) the chain is Extracellular. The chain crosses the membrane as a helical span at residues 22–42 (IICSLLFSTLYLLSYIVITKF). Over 43–60 (KKHADFATVDVEDAAVNR) the chain is Cytoplasmic. The helical transmembrane segment at 61–81 (IALWMCTFTLAVSVGAVLLLP) threads the bilayer. Over 82–112 (FSIISNEVLLSVPHNYYIQWLNGSLIHGLWN) the chain is Extracellular. A helical transmembrane segment spans residues 113-133 (LVFLFSNLSLVFLMPFAYLFT). At 134–153 (EAEGFAGSKKGVMSRVYETT) the chain is on the cytoplasmic side. The chain crosses the membrane as a helical span at residues 154–174 (VVLLLLTLLVFGIVWVASAIF). Topologically, residues 175–194 (DDDSAGRESLYDLWEYYLPY) are extracellular. A helical membrane pass occupies residues 195–215 (LYSGISLFGVLLLLLCTPFGL). Residues 216–294 (SRMFSVTGNL…RRRASPWQRN (79 aa)) are Cytoplasmic-facing. The chain crosses the membrane as a helical span at residues 295 to 315 (LVYPLAMLLLLALTGITVLIV). Residues 316 to 342 (CVNVLELLIDEAAMPKGIQGSQLGKVS) are Extracellular-facing. A helical membrane pass occupies residues 343 to 363 (FSVFGSFGAAVQVILIFYLMA). The Cytoplasmic segment spans residues 364 to 386 (SSVVGFYSSPLFIQLLPQKQNTP). A helical transmembrane segment spans residues 387-407 (MTKIIGNCVSLLILSSALPVF). The Extracellular portion of the chain corresponds to 408-429 (SRTLGITRFDLLGDFGRFNWLG). The chain crosses the membrane as a helical span at residues 430–450 (NFYLILLYNMMFAGLATLCLV). Residues 451–483 (KKFTWAVQAELIRAFGLDRLPLSVKKIRSQGKA) lie on the Cytoplasmic side of the membrane.

The protein belongs to the LIMR family. Dimer. Can also form higher oligomers.

The protein resides in the cell membrane. Its subcellular location is the endoplasmic reticulum membrane. Its function is as follows. May play a role in lymphocyte development by negatively regulating the canonical Wnt signaling pathway. May act as a LCN1 receptor. The sequence is that of Protein LMBR1L (lmbr1l) from Xenopus laevis (African clawed frog).